Here is a 362-residue protein sequence, read N- to C-terminus: Phosphoserine aminotransferase (362 aa).

Ser9 and Arg42 together coordinate L-glutamate. Residues 76–77 (GR), Trp102, Thr153, Asp174, and Gln197 each bind pyridoxal 5'-phosphate. Lys198 bears the N6-(pyridoxal phosphate)lysine mark. Residue 239 to 240 (NT) participates in pyridoxal 5'-phosphate binding.

It belongs to the class-V pyridoxal-phosphate-dependent aminotransferase family. SerC subfamily. As to quaternary structure, homodimer. Requires pyridoxal 5'-phosphate as cofactor.

The protein resides in the cytoplasm. The catalysed reaction is O-phospho-L-serine + 2-oxoglutarate = 3-phosphooxypyruvate + L-glutamate. It catalyses the reaction 4-(phosphooxy)-L-threonine + 2-oxoglutarate = (R)-3-hydroxy-2-oxo-4-phosphooxybutanoate + L-glutamate. Its pathway is amino-acid biosynthesis; L-serine biosynthesis; L-serine from 3-phospho-D-glycerate: step 2/3. It participates in cofactor biosynthesis; pyridoxine 5'-phosphate biosynthesis; pyridoxine 5'-phosphate from D-erythrose 4-phosphate: step 3/5. Catalyzes the reversible conversion of 3-phosphohydroxypyruvate to phosphoserine and of 3-hydroxy-2-oxo-4-phosphonooxybutanoate to phosphohydroxythreonine. The chain is Phosphoserine aminotransferase from Salmonella arizonae (strain ATCC BAA-731 / CDC346-86 / RSK2980).